A 160-amino-acid chain; its full sequence is 6,7-dimethyl-8-ribityllumazine synthase (160 aa).

Residues W27, 59–61 (AIE), and 81–83 (VVI) each bind 5-amino-6-(D-ribitylamino)uracil. 86–87 (ET) is a binding site for (2S)-2-hydroxy-3-oxobutyl phosphate. H89 (proton donor) is an active-site residue. N114 contacts 5-amino-6-(D-ribitylamino)uracil. R128 serves as a coordination point for (2S)-2-hydroxy-3-oxobutyl phosphate.

Belongs to the DMRL synthase family. As to quaternary structure, homopentamer.

The enzyme catalyses (2S)-2-hydroxy-3-oxobutyl phosphate + 5-amino-6-(D-ribitylamino)uracil = 6,7-dimethyl-8-(1-D-ribityl)lumazine + phosphate + 2 H2O + H(+). It functions in the pathway cofactor biosynthesis; riboflavin biosynthesis; riboflavin from 2-hydroxy-3-oxobutyl phosphate and 5-amino-6-(D-ribitylamino)uracil: step 1/2. In terms of biological role, catalyzes the formation of 6,7-dimethyl-8-ribityllumazine by condensation of 5-amino-6-(D-ribitylamino)uracil with 3,4-dihydroxy-2-butanone 4-phosphate. This is the penultimate step in the biosynthesis of riboflavin. This is 6,7-dimethyl-8-ribityllumazine synthase from Mycobacterium ulcerans (strain Agy99).